A 311-amino-acid chain; its full sequence is Putative S-adenosyl-L-methionine-dependent methyltransferase MMAR_0358 (311 aa).

S-adenosyl-L-methionine-binding positions include D132 and 161–162 (DL).

The protein belongs to the UPF0677 family.

Its function is as follows. Exhibits S-adenosyl-L-methionine-dependent methyltransferase activity. This chain is Putative S-adenosyl-L-methionine-dependent methyltransferase MMAR_0358, found in Mycobacterium marinum (strain ATCC BAA-535 / M).